The chain runs to 216 residues: Methylthioribulose-1-phosphate dehydratase (216 aa).

Residues His-101 and His-103 each coordinate Zn(2+).

This sequence belongs to the aldolase class II family. MtnB subfamily. It depends on Zn(2+) as a cofactor.

It catalyses the reaction 5-(methylsulfanyl)-D-ribulose 1-phosphate = 5-methylsulfanyl-2,3-dioxopentyl phosphate + H2O. It functions in the pathway amino-acid biosynthesis; L-methionine biosynthesis via salvage pathway; L-methionine from S-methyl-5-thio-alpha-D-ribose 1-phosphate: step 2/6. Functionally, catalyzes the dehydration of methylthioribulose-1-phosphate (MTRu-1-P) into 2,3-diketo-5-methylthiopentyl-1-phosphate (DK-MTP-1-P). This is Methylthioribulose-1-phosphate dehydratase from Bradyrhizobium sp. (strain BTAi1 / ATCC BAA-1182).